The sequence spans 142 residues: Transcriptional regulator MraZ (142 aa).

2 consecutive SpoVT-AbrB domains span residues 5-47 (EYQH…PLDE) and 76-119 (ACEV…SKEK).

Belongs to the MraZ family. In terms of assembly, forms oligomers.

It is found in the cytoplasm. The protein localises to the nucleoid. The sequence is that of Transcriptional regulator MraZ from Clostridium beijerinckii (strain ATCC 51743 / NCIMB 8052) (Clostridium acetobutylicum).